The sequence spans 286 residues: Protein METABOLIC NETWORK MODULATOR 1 (286 aa).

The span at 1 to 10 (MEKESHEENN) shows a compositional bias: basic and acidic residues. Disordered stretches follow at residues 1-60 (MEKE…DDEA), 123-146 (VMHH…GSGV), and 181-204 (GGER…SGAS). Residues 20 to 29 (KRKRGRPRKQ) are compositionally biased toward basic residues. The segment covering 30-39 (LKLESNEHSL) has biased composition (basic and acidic residues). Residues 131–140 (KRGRKSRFRE) show a composition bias toward basic residues. Positions 191-204 (PMQTETGSQASGAS) are enriched in polar residues.

In terms of tissue distribution, mailny observed in young seedlings and in emerging leaves.

Lineage-specific modulator of primary metabolism. Influences flowering time. This is Protein METABOLIC NETWORK MODULATOR 1 from Arabidopsis thaliana (Mouse-ear cress).